A 155-amino-acid polypeptide reads, in one-letter code: Protein-export protein SecB (155 aa).

It belongs to the SecB family. Homotetramer, a dimer of dimers. One homotetramer interacts with 1 SecA dimer.

The protein localises to the cytoplasm. Functionally, one of the proteins required for the normal export of preproteins out of the cell cytoplasm. It is a molecular chaperone that binds to a subset of precursor proteins, maintaining them in a translocation-competent state. It also specifically binds to its receptor SecA. The polypeptide is Protein-export protein SecB (Escherichia coli O127:H6 (strain E2348/69 / EPEC)).